The primary structure comprises 124 residues: Protein CYSTEINE-RICH TRANSMEMBRANE MODULE 10 (124 aa).

The interval 1 to 103 is disordered; sequence MSYQDPQHPV…PKNKKDKKDS (103 aa). Pro residues-rich tracts occupy residues 27 to 40 and 65 to 88; these read AGYP…PPQY and GYPP…PPPH. Residues 101-118 traverse the membrane as a helical segment; the sequence is KDSGGFMEGCLAMLCCCV.

Belongs to the CYSTM1 family. In terms of assembly, heterodimers. Interacts with CYSTM7 and WIH1/CYSTM13. In terms of tissue distribution, mostly expressed in stems and,at low levels, in stems, roots, flowers, siliques and leaves.

It is found in the cell membrane. Its subcellular location is the cytoplasm. Its function is as follows. Involved in resistance to abiotic stress. The protein is Protein CYSTEINE-RICH TRANSMEMBRANE MODULE 10 of Arabidopsis thaliana (Mouse-ear cress).